We begin with the raw amino-acid sequence, 273 residues long: Large ribosomal subunit protein uL2c (273 aa).

Disordered regions lie at residues glutamate 30–glycine 55 and glycine 222–arginine 243. Residues asparagine 45–glycine 55 are compositionally biased toward basic residues.

The protein belongs to the universal ribosomal protein uL2 family. As to quaternary structure, part of the 50S ribosomal subunit.

It is found in the plastid. In Prototheca wickerhamii, this protein is Large ribosomal subunit protein uL2c (rpl2).